Reading from the N-terminus, the 610-residue chain is 6(G)-fructosyltransferase (610 aa).

Residues 1–20 (MATSLQAPILGSRPPRRTLR) are Cytoplasmic-facing. Residues 21-38 (FLSFALFSALVLVVASFS) form a helical; Signal-anchor for type II membrane protein membrane-spanning segment. Residues 39–610 (SRKSESGSGL…NQYYPFTSSN (572 aa)) lie on the Vacuolar side of the membrane. Residues 79–82 (YMND), Q98, W106, 141–142 (WT), and 207–208 (RD) contribute to the substrate site. D82 is an active-site residue. N-linked (GlcNAc...) asparagine glycosylation is found at N215, N229, and N248. E266 is a binding site for substrate. An N-linked (GlcNAc...) asparagine glycan is attached at N459. C460 and C508 form a disulfide bridge. 2 N-linked (GlcNAc...) asparagine glycosylation sites follow: N580 and N597.

Belongs to the glycosyl hydrolase 32 family. Post-translationally, might be processed in two N-terminal and C-terminal proteolytic fragments.

The protein localises to the vacuole membrane. It catalyses the reaction [1-beta-D-fructofuranosyl-(2-&gt;1)-]m+1 alpha-D-glucopyranoside + [1-beta-D-fructofuranosyl-(2-&gt;1)-]n+1 alpha-D-glucopyranoside = [1-beta-D-fructofuranosyl-(2-&gt;1)-]m alpha-D-glucopyranoside + [1-beta-D-fructofuranosyl-(2-&gt;1)-]n+1 beta-D-fructofuranosyl-(2-&gt;6)-alpha-D-glucopyranoside (m &gt; 0, n &gt;= 0).. Functionally, involved in the synthesis of fructan of the inulin neoseries. Has no 1-FFT activity. This chain is 6(G)-fructosyltransferase (FT1), found in Asparagus officinalis (Garden asparagus).